Reading from the N-terminus, the 264-residue chain is Hydroxyethylthiazole kinase (264 aa).

Met-52 is a binding site for substrate. ATP is bound by residues Arg-127 and Thr-173. Residue Gly-200 coordinates substrate.

The protein belongs to the Thz kinase family. Requires Mg(2+) as cofactor.

The enzyme catalyses 5-(2-hydroxyethyl)-4-methylthiazole + ATP = 4-methyl-5-(2-phosphooxyethyl)-thiazole + ADP + H(+). It participates in cofactor biosynthesis; thiamine diphosphate biosynthesis; 4-methyl-5-(2-phosphoethyl)-thiazole from 5-(2-hydroxyethyl)-4-methylthiazole: step 1/1. Functionally, catalyzes the phosphorylation of the hydroxyl group of 4-methyl-5-beta-hydroxyethylthiazole (THZ). The polypeptide is Hydroxyethylthiazole kinase (Serratia proteamaculans (strain 568)).